A 338-amino-acid polypeptide reads, in one-letter code: Flap endonuclease 1 (338 aa).

The N-domain stretch occupies residues 1-98; it reads MGTDIGDLLQ…ETLSRRKEVR (98 aa). Residues Asp27, Asp80, Glu152, Glu154, Asp173, Asp175, and Asp236 each coordinate Mg(2+). The tract at residues 116 to 257 is I-domain; that stretch reads AAYKYAQASS…TALKLIKKHG (142 aa). An interaction with PCNA region spans residues 330 to 338; that stretch reads RQKTLDQWF.

Belongs to the XPG/RAD2 endonuclease family. FEN1 subfamily. In terms of assembly, interacts with PCNA. PCNA stimulates the nuclease activity without altering cleavage specificity. The cofactor is Mg(2+).

Structure-specific nuclease with 5'-flap endonuclease and 5'-3' exonuclease activities involved in DNA replication and repair. During DNA replication, cleaves the 5'-overhanging flap structure that is generated by displacement synthesis when DNA polymerase encounters the 5'-end of a downstream Okazaki fragment. Binds the unpaired 3'-DNA end and kinks the DNA to facilitate 5' cleavage specificity. Cleaves one nucleotide into the double-stranded DNA from the junction in flap DNA, leaving a nick for ligation. Also involved in the base excision repair (BER) pathway. Acts as a genome stabilization factor that prevents flaps from equilibrating into structures that lead to duplications and deletions. Also possesses 5'-3' exonuclease activity on nicked or gapped double-stranded DNA. This is Flap endonuclease 1 from Methanosarcina acetivorans (strain ATCC 35395 / DSM 2834 / JCM 12185 / C2A).